Here is a 37-residue protein sequence, read N- to C-terminus: Large ribosomal subunit protein bL36 (37 aa).

It belongs to the bacterial ribosomal protein bL36 family.

The sequence is that of Large ribosomal subunit protein bL36 from Chromobacterium violaceum (strain ATCC 12472 / DSM 30191 / JCM 1249 / CCUG 213 / NBRC 12614 / NCIMB 9131 / NCTC 9757 / MK).